A 126-amino-acid polypeptide reads, in one-letter code: Aspartate 1-decarboxylase (126 aa).

The active-site Schiff-base intermediate with substrate; via pyruvic acid is the S25. S25 carries the pyruvic acid (Ser) modification. T57 lines the substrate pocket. Catalysis depends on Y58, which acts as the Proton donor. 73-75 contacts substrate; the sequence is GSA.

It belongs to the PanD family. As to quaternary structure, heterooctamer of four alpha and four beta subunits. Pyruvate serves as cofactor. In terms of processing, is synthesized initially as an inactive proenzyme, which is activated by self-cleavage at a specific serine bond to produce a beta-subunit with a hydroxyl group at its C-terminus and an alpha-subunit with a pyruvoyl group at its N-terminus.

Its subcellular location is the cytoplasm. The catalysed reaction is L-aspartate + H(+) = beta-alanine + CO2. Its pathway is cofactor biosynthesis; (R)-pantothenate biosynthesis; beta-alanine from L-aspartate: step 1/1. Catalyzes the pyruvoyl-dependent decarboxylation of aspartate to produce beta-alanine. This chain is Aspartate 1-decarboxylase, found in Chromobacterium violaceum (strain ATCC 12472 / DSM 30191 / JCM 1249 / CCUG 213 / NBRC 12614 / NCIMB 9131 / NCTC 9757 / MK).